The primary structure comprises 400 residues: Phosphoglycerate kinase (400 aa).

Residues 21–23 (DLN), R36, 59–62 (HLGR), R116, and R149 each bind substrate. ATP contacts are provided by residues K200, E317, and 343–346 (GGDT).

This sequence belongs to the phosphoglycerate kinase family. As to quaternary structure, monomer.

The protein resides in the cytoplasm. It carries out the reaction (2R)-3-phosphoglycerate + ATP = (2R)-3-phospho-glyceroyl phosphate + ADP. The protein operates within carbohydrate degradation; glycolysis; pyruvate from D-glyceraldehyde 3-phosphate: step 2/5. The chain is Phosphoglycerate kinase from Blochmanniella floridana.